The sequence spans 372 residues: Putative glutamate--cysteine ligase 2 (372 aa).

Belongs to the glutamate--cysteine ligase type 2 family. YbdK subfamily. Homodimer.

It carries out the reaction L-cysteine + L-glutamate + ATP = gamma-L-glutamyl-L-cysteine + ADP + phosphate + H(+). ATP-dependent carboxylate-amine ligase which exhibits weak glutamate--cysteine ligase activity. This is Putative glutamate--cysteine ligase 2 (ybdK) from Salmonella heidelberg (strain SL476).